The primary structure comprises 141 residues: 15 kDa lipoprotein (141 aa).

The first 17 residues, 1-17 (MVKRGRFALCLAVLLGA), serve as a signal peptide directing secretion. A lipid anchor (N-palmitoyl cysteine) is attached at cysteine 18. A lipid anchor (S-diacylglycerol cysteine) is attached at cysteine 18.

Its subcellular location is the cell membrane. This is 15 kDa lipoprotein (tpp15) from Treponema pallidum (strain Nichols).